Reading from the N-terminus, the 302-residue chain is Deoxyhypusine hydroxylase (302 aa).

M1 is modified (N-acetylmethionine). HEAT-like PBS-type repeat units follow at residues 54-80 (LKHE…VLQD), 87-113 (VRHE…YSSD), 174-200 (ERYR…GLHC), 205-231 (FRHE…ALAR), and 238-264 (VRHE…HADD). Residues H56, H89, and E90 each coordinate Fe cation. 3 residues coordinate Fe cation: H207, H240, and E241.

Belongs to the deoxyhypusine hydroxylase family. It depends on Fe(2+) as a cofactor.

The catalysed reaction is [eIF5A protein]-deoxyhypusine + AH2 + O2 = [eIF5A protein]-hypusine + A + H2O. Its pathway is protein modification; eIF5A hypusination. In terms of biological role, catalyzes the hydroxylation of the N(6)-(4-aminobutyl)-L-lysine intermediate produced by deoxyhypusine synthase/DHPS on a critical lysine of the eukaryotic translation initiation factor 5A/eIF-5A. This is the second step of the post-translational modification of that lysine into an unusual amino acid residue named hypusine. Hypusination is unique to mature eIF-5A factor and is essential for its function. The sequence is that of Deoxyhypusine hydroxylase from Homo sapiens (Human).